The sequence spans 284 residues: Pantothenate synthetase (284 aa).

Residue 30–37 (MGALHEGH) participates in ATP binding. The Proton donor role is filled by His-37. Gln-61 contributes to the (R)-pantoate binding site. Gln-61 is a beta-alanine binding site. Residue 147-150 (GEKD) coordinates ATP. Position 153 (Gln-153) interacts with (R)-pantoate. ATP is bound by residues Val-176 and 184–187 (TSSR).

It belongs to the pantothenate synthetase family. In terms of assembly, homodimer.

Its subcellular location is the cytoplasm. It carries out the reaction (R)-pantoate + beta-alanine + ATP = (R)-pantothenate + AMP + diphosphate + H(+). It participates in cofactor biosynthesis; (R)-pantothenate biosynthesis; (R)-pantothenate from (R)-pantoate and beta-alanine: step 1/1. Functionally, catalyzes the condensation of pantoate with beta-alanine in an ATP-dependent reaction via a pantoyl-adenylate intermediate. This chain is Pantothenate synthetase, found in Chlorobaculum tepidum (strain ATCC 49652 / DSM 12025 / NBRC 103806 / TLS) (Chlorobium tepidum).